We begin with the raw amino-acid sequence, 111 residues long: HTH-type transcriptional regulator SinR (111 aa).

In terms of domain architecture, HTH cro/C1-type spans 6-61; it reads IKQYRKEKGYSLSELAEKAGVAKSYLSSIERNLQTNPSIQFLEKVSAVLDVSVHTL. The segment at residues 17–36 is a DNA-binding region (H-T-H motif); sequence LSELAEKAGVAKSYLSSIER. In terms of domain architecture, Sin spans 65–103; sequence KDETEYDGQLDSEWENLVRDAMASGVSKKQFREFLDYQK.

As to quaternary structure, homotetramer. Also associates with SinI.

Functionally, affects autolysin level and flagellation. In Bacillus licheniformis, this protein is HTH-type transcriptional regulator SinR (sinR).